Reading from the N-terminus, the 283-residue chain is 4-hydroxy-3-methylbut-2-enyl diphosphate reductase (283 aa).

Cysteine 12 contributes to the [4Fe-4S] cluster binding site. Histidine 40 and histidine 72 together coordinate (2E)-4-hydroxy-3-methylbut-2-enyl diphosphate. Histidine 40 and histidine 72 together coordinate dimethylallyl diphosphate. 2 residues coordinate isopentenyl diphosphate: histidine 40 and histidine 72. Cysteine 94 contributes to the [4Fe-4S] cluster binding site. Histidine 122 is a binding site for (2E)-4-hydroxy-3-methylbut-2-enyl diphosphate. Residue histidine 122 coordinates dimethylallyl diphosphate. Histidine 122 is a binding site for isopentenyl diphosphate. Glutamate 124 serves as the catalytic Proton donor. Threonine 160 provides a ligand contact to (2E)-4-hydroxy-3-methylbut-2-enyl diphosphate. Cysteine 188 lines the [4Fe-4S] cluster pocket. 3 residues coordinate (2E)-4-hydroxy-3-methylbut-2-enyl diphosphate: serine 216, asparagine 218, and serine 259. 3 residues coordinate dimethylallyl diphosphate: serine 216, asparagine 218, and serine 259. The isopentenyl diphosphate site is built by serine 216, asparagine 218, and serine 259.

This sequence belongs to the IspH family. [4Fe-4S] cluster is required as a cofactor.

The enzyme catalyses isopentenyl diphosphate + 2 oxidized [2Fe-2S]-[ferredoxin] + H2O = (2E)-4-hydroxy-3-methylbut-2-enyl diphosphate + 2 reduced [2Fe-2S]-[ferredoxin] + 2 H(+). The catalysed reaction is dimethylallyl diphosphate + 2 oxidized [2Fe-2S]-[ferredoxin] + H2O = (2E)-4-hydroxy-3-methylbut-2-enyl diphosphate + 2 reduced [2Fe-2S]-[ferredoxin] + 2 H(+). The protein operates within isoprenoid biosynthesis; dimethylallyl diphosphate biosynthesis; dimethylallyl diphosphate from (2E)-4-hydroxy-3-methylbutenyl diphosphate: step 1/1. It participates in isoprenoid biosynthesis; isopentenyl diphosphate biosynthesis via DXP pathway; isopentenyl diphosphate from 1-deoxy-D-xylulose 5-phosphate: step 6/6. Functionally, catalyzes the conversion of 1-hydroxy-2-methyl-2-(E)-butenyl 4-diphosphate (HMBPP) into a mixture of isopentenyl diphosphate (IPP) and dimethylallyl diphosphate (DMAPP). Acts in the terminal step of the DOXP/MEP pathway for isoprenoid precursor biosynthesis. The sequence is that of 4-hydroxy-3-methylbut-2-enyl diphosphate reductase from Dictyoglomus turgidum (strain DSM 6724 / Z-1310).